The chain runs to 116 residues: Large ribosomal subunit protein uL22 (116 aa).

This sequence belongs to the universal ribosomal protein uL22 family. Part of the 50S ribosomal subunit.

Its function is as follows. This protein binds specifically to 23S rRNA; its binding is stimulated by other ribosomal proteins, e.g. L4, L17, and L20. It is important during the early stages of 50S assembly. It makes multiple contacts with different domains of the 23S rRNA in the assembled 50S subunit and ribosome. The globular domain of the protein is located near the polypeptide exit tunnel on the outside of the subunit, while an extended beta-hairpin is found that lines the wall of the exit tunnel in the center of the 70S ribosome. The polypeptide is Large ribosomal subunit protein uL22 (Sulfurihydrogenibium sp. (strain YO3AOP1)).